The primary structure comprises 165 residues: Phosphopantetheine adenylyltransferase (165 aa).

Residue serine 9 participates in substrate binding. Residues 9–10 (SF) and histidine 17 each bind ATP. Lysine 41, isoleucine 75, and arginine 89 together coordinate substrate. ATP-binding positions include 90-92 (GVR), glutamate 100, and 125-131 (YLFVRSD).

This sequence belongs to the bacterial CoaD family. As to quaternary structure, homohexamer. Requires Mg(2+) as cofactor.

Its subcellular location is the cytoplasm. It catalyses the reaction (R)-4'-phosphopantetheine + ATP + H(+) = 3'-dephospho-CoA + diphosphate. It functions in the pathway cofactor biosynthesis; coenzyme A biosynthesis; CoA from (R)-pantothenate: step 4/5. Functionally, reversibly transfers an adenylyl group from ATP to 4'-phosphopantetheine, yielding dephospho-CoA (dPCoA) and pyrophosphate. In Borrelia duttonii (strain Ly), this protein is Phosphopantetheine adenylyltransferase.